Here is a 387-residue protein sequence, read N- to C-terminus: Methionine aminopeptidase 1 (387 aa).

Ser-2 is modified (N-acetylserine). Positions 2–10 (STATTTVTT) are excised as a propeptide. The C6H2-type zinc-finger motif lies at 19–73 (KIYCSGLQCGRETSSQMKCPVCLKQGIVSIFCDTSCYENNYKAHKALHNAKDGLE). Residues Cys-22, Cys-27, Cys-37, Cys-40, Cys-50, Cys-54, His-62, and His-66 each coordinate Zn(2+). His-202 is an a protein binding site. Residues Asp-219, Asp-230, and His-294 each contribute to the Zn(2+) site. His-301 lines the a protein pocket. Residues Glu-327 and Glu-358 each contribute to the Zn(2+) site.

This sequence belongs to the peptidase M24A family. Methionine aminopeptidase type 1 subfamily. In terms of assembly, associates with the 60S ribosomal subunit of the 80S translational complex. Zn(2+) serves as cofactor. Co(2+) is required as a cofactor. Requires Mn(2+) as cofactor. It depends on Fe(2+) as a cofactor.

The protein resides in the cytoplasm. It carries out the reaction Release of N-terminal amino acids, preferentially methionine, from peptides and arylamides.. With respect to regulation, in contract to the MetAP 2 isoform, is not inhibited by the fungal metabolite fumagillin, an antiangiogenic drug. In terms of biological role, cotranslationally removes the N-terminal methionine from nascent proteins. The N-terminal methionine is often cleaved when the second residue in the primary sequence is small and uncharged (Met-Ala-, Cys, Gly, Pro, Ser, Thr, or Val). Plays the major role in N-terminal methionine removal. Less efficient when the second residue is Val. The sequence is that of Methionine aminopeptidase 1 (MAP1) from Saccharomyces cerevisiae (strain ATCC 204508 / S288c) (Baker's yeast).